The chain runs to 372 residues: N-methyl-L-tryptophan oxidase (372 aa).

Residue 4-34 coordinates FAD; the sequence is DLIIIGSGSVGAAAGYYATRAGLNVLMTDAH. Cysteine 308 carries the S-8alpha-FAD cysteine modification.

The protein belongs to the MSOX/MTOX family. MTOX subfamily. In terms of assembly, monomer. The cofactor is FAD.

It carries out the reaction N(alpha)-methyl-L-tryptophan + O2 + H2O = L-tryptophan + formaldehyde + H2O2. Catalyzes the oxidative demethylation of N-methyl-L-tryptophan. The chain is N-methyl-L-tryptophan oxidase from Escherichia coli O127:H6 (strain E2348/69 / EPEC).